The sequence spans 349 residues: Fructose-1,6-bisphosphatase class 1 (349 aa).

Positions 91, 110, 112, and 113 each coordinate Mg(2+). Residues 113–116 (DGSS) and Asn-205 contribute to the substrate site. Glu-277 is a binding site for Mg(2+).

The protein belongs to the FBPase class 1 family. As to quaternary structure, homotetramer. The cofactor is Mg(2+).

It localises to the cytoplasm. It carries out the reaction beta-D-fructose 1,6-bisphosphate + H2O = beta-D-fructose 6-phosphate + phosphate. The protein operates within carbohydrate biosynthesis; gluconeogenesis. The polypeptide is Fructose-1,6-bisphosphatase class 1 (Rhizobium meliloti (strain 1021) (Ensifer meliloti)).